Here is a 175-residue protein sequence, read N- to C-terminus: UPF0398 protein SSA_1858 (175 aa).

The protein belongs to the UPF0398 family.

The protein is UPF0398 protein SSA_1858 of Streptococcus sanguinis (strain SK36).